The following is a 197-amino-acid chain: Elongation factor Ts (197 aa).

The tract at residues 81–84 is involved in Mg(2+) ion dislocation from EF-Tu; the sequence is TDFV.

The protein belongs to the EF-Ts family.

It is found in the cytoplasm. Its function is as follows. Associates with the EF-Tu.GDP complex and induces the exchange of GDP to GTP. It remains bound to the aminoacyl-tRNA.EF-Tu.GTP complex up to the GTP hydrolysis stage on the ribosome. The protein is Elongation factor Ts of Thermotoga neapolitana (strain ATCC 49049 / DSM 4359 / NBRC 107923 / NS-E).